A 222-amino-acid chain; its full sequence is MLNLRAVMELLTIEKAQDYGLTLPETGQRDQVLHDALVGYLANSRSGTRATKTKATVKASGKKPWRQKGTGRARAGYVSSPVWVGGGVVFGPQPRDFSKNIPKKIKGLALLKAFAAKVRSEEVYCLEKVEMTEIKTKKMLSLLEGWDGKESGLLILKNPSRNVLLSGRNIPHLGIVRAQDVNALDLLGFKKVFLERPAIEVLVERVKKFKREKSQNENGGTR.

It belongs to the universal ribosomal protein uL4 family. Part of the 50S ribosomal subunit.

In terms of biological role, one of the primary rRNA binding proteins, this protein initially binds near the 5'-end of the 23S rRNA. It is important during the early stages of 50S assembly. It makes multiple contacts with different domains of the 23S rRNA in the assembled 50S subunit and ribosome. Its function is as follows. Forms part of the polypeptide exit tunnel. The sequence is that of Large ribosomal subunit protein uL4 from Methylacidiphilum infernorum (isolate V4) (Methylokorus infernorum (strain V4)).